Reading from the N-terminus, the 262-residue chain is Type III pantothenate kinase (262 aa).

Residue 12–19 (DIGNTSIA) participates in ATP binding. Substrate is bound by residues Tyr94 and 109-112 (GSDV). Residue Asp111 is the Proton acceptor of the active site. Asp132 provides a ligand contact to K(+). Thr135 serves as a coordination point for ATP. A substrate-binding site is contributed by Thr187.

This sequence belongs to the type III pantothenate kinase family. Homodimer. NH4(+) serves as cofactor. The cofactor is K(+).

It localises to the cytoplasm. The catalysed reaction is (R)-pantothenate + ATP = (R)-4'-phosphopantothenate + ADP + H(+). The protein operates within cofactor biosynthesis; coenzyme A biosynthesis; CoA from (R)-pantothenate: step 1/5. Catalyzes the phosphorylation of pantothenate (Pan), the first step in CoA biosynthesis. The sequence is that of Type III pantothenate kinase from Borreliella burgdorferi (strain ATCC 35210 / DSM 4680 / CIP 102532 / B31) (Borrelia burgdorferi).